Here is a 136-residue protein sequence, read N- to C-terminus: Small ribosomal subunit protein uS11c (136 aa).

It belongs to the universal ribosomal protein uS11 family. Part of the 30S ribosomal subunit.

Its subcellular location is the plastid. The sequence is that of Small ribosomal subunit protein uS11c from Epifagus virginiana (Beechdrops).